A 544-amino-acid polypeptide reads, in one-letter code: Chaperonin GroEL (544 aa).

Residues 30–33 (TLGP), lysine 51, 87–91 (DGTTT), glycine 415, 479–481 (NAA), and aspartate 495 each bind ATP.

This sequence belongs to the chaperonin (HSP60) family. As to quaternary structure, forms a cylinder of 14 subunits composed of two heptameric rings stacked back-to-back. Interacts with the co-chaperonin GroES.

The protein localises to the cytoplasm. It carries out the reaction ATP + H2O + a folded polypeptide = ADP + phosphate + an unfolded polypeptide.. Together with its co-chaperonin GroES, plays an essential role in assisting protein folding. The GroEL-GroES system forms a nano-cage that allows encapsulation of the non-native substrate proteins and provides a physical environment optimized to promote and accelerate protein folding. The protein is Chaperonin GroEL of Francisella tularensis subsp. mediasiatica (strain FSC147).